The following is a 258-amino-acid chain: Type III pantothenate kinase (258 aa).

9–16 lines the ATP pocket; that stretch reads DIGNTSVN. 110–113 contributes to the substrate binding site; it reads GADR. The active-site Proton acceptor is the Asp-112. Position 132 (Asp-132) interacts with K(+). Thr-135 provides a ligand contact to ATP. Residue Thr-187 participates in substrate binding.

This sequence belongs to the type III pantothenate kinase family. As to quaternary structure, homodimer. Requires NH4(+) as cofactor. The cofactor is K(+).

It localises to the cytoplasm. It carries out the reaction (R)-pantothenate + ATP = (R)-4'-phosphopantothenate + ADP + H(+). It participates in cofactor biosynthesis; coenzyme A biosynthesis; CoA from (R)-pantothenate: step 1/5. In terms of biological role, catalyzes the phosphorylation of pantothenate (Pan), the first step in CoA biosynthesis. The protein is Type III pantothenate kinase of Dehalococcoides mccartyi (strain ATCC BAA-2266 / KCTC 15142 / 195) (Dehalococcoides ethenogenes (strain 195)).